Consider the following 133-residue polypeptide: Phosphoribosyl-AMP cyclohydrolase (133 aa).

Asp90 serves as a coordination point for Mg(2+). Cys91 is a Zn(2+) binding site. Mg(2+) contacts are provided by Asp92 and Asp94. Zn(2+) is bound by residues Cys107 and Cys114.

The protein belongs to the PRA-CH family. In terms of assembly, homodimer. The cofactor is Mg(2+). Zn(2+) is required as a cofactor.

It localises to the cytoplasm. The catalysed reaction is 1-(5-phospho-beta-D-ribosyl)-5'-AMP + H2O = 1-(5-phospho-beta-D-ribosyl)-5-[(5-phospho-beta-D-ribosylamino)methylideneamino]imidazole-4-carboxamide. It functions in the pathway amino-acid biosynthesis; L-histidine biosynthesis; L-histidine from 5-phospho-alpha-D-ribose 1-diphosphate: step 3/9. Its function is as follows. Catalyzes the hydrolysis of the adenine ring of phosphoribosyl-AMP. In Streptomyces avermitilis (strain ATCC 31267 / DSM 46492 / JCM 5070 / NBRC 14893 / NCIMB 12804 / NRRL 8165 / MA-4680), this protein is Phosphoribosyl-AMP cyclohydrolase.